A 189-amino-acid polypeptide reads, in one-letter code: GMP synthase [glutamine-hydrolyzing] subunit A (189 aa).

A Glutamine amidotransferase type-1 domain is found at 1–189; the sequence is MIVILNNGGQ…CKKCGFEFEE (189 aa). Cys76 (nucleophile) is an active-site residue. Residues His163 and Glu165 contribute to the active site.

Heterodimer composed of a glutamine amidotransferase subunit (A) and a GMP-binding subunit (B).

It catalyses the reaction XMP + L-glutamine + ATP + H2O = GMP + L-glutamate + AMP + diphosphate + 2 H(+). Its pathway is purine metabolism; GMP biosynthesis; GMP from XMP (L-Gln route): step 1/1. Functionally, catalyzes the synthesis of GMP from XMP. The polypeptide is GMP synthase [glutamine-hydrolyzing] subunit A (Methanococcus maripaludis (strain C5 / ATCC BAA-1333)).